We begin with the raw amino-acid sequence, 281 residues long: Nucleoid occlusion protein (281 aa).

Positions 1–24 (MKHPFSRLFSFGEKEQEEMEEKQE) are disordered. The segment at residues 145–164 (EALAQRLGKGQSTIANKLRL) is a DNA-binding region (H-T-H motif).

Belongs to the ParB family.

The protein localises to the cytoplasm. The protein resides in the nucleoid. Functionally, effects nucleoid occlusion by binding relatively nonspecifically to DNA and preventing the assembly of the division machinery in the vicinity of the nucleoid, especially under conditions that disturb the cell cycle. It helps to coordinate cell division and chromosome segregation by preventing the formation of the Z ring through the nucleoid, which would cause chromosome breakage. In Geobacillus kaustophilus (strain HTA426), this protein is Nucleoid occlusion protein.